The sequence spans 177 residues: Large ribosomal subunit protein uL6 (177 aa).

It belongs to the universal ribosomal protein uL6 family. In terms of assembly, part of the 50S ribosomal subunit.

In terms of biological role, this protein binds to the 23S rRNA, and is important in its secondary structure. It is located near the subunit interface in the base of the L7/L12 stalk, and near the tRNA binding site of the peptidyltransferase center. This is Large ribosomal subunit protein uL6 from Shewanella amazonensis (strain ATCC BAA-1098 / SB2B).